The sequence spans 282 residues: Adenosylcobinamide-GDP ribazoletransferase (282 aa).

The next 6 membrane-spanning stretches (helical) occupy residues 47–67 (GVGILVGVMAALVYGLIQALL), 72–92 (FTPLVAAVLSTAATVLLTGGF), 124–144 (AFGAMALMLALLGKTALLAML), 167–187 (AALLTGHVVSRGLPLLLIWLL), 208–228 (GSLLVAFIWSFVVLALAGLAL), and 231–251 (ISLIVACSFSLLALLWMGALF).

The protein belongs to the CobS family. It depends on Mg(2+) as a cofactor.

Its subcellular location is the cell inner membrane. The catalysed reaction is alpha-ribazole + adenosylcob(III)inamide-GDP = adenosylcob(III)alamin + GMP + H(+). The enzyme catalyses alpha-ribazole 5'-phosphate + adenosylcob(III)inamide-GDP = adenosylcob(III)alamin 5'-phosphate + GMP + H(+). It participates in cofactor biosynthesis; adenosylcobalamin biosynthesis; adenosylcobalamin from cob(II)yrinate a,c-diamide: step 7/7. Functionally, joins adenosylcobinamide-GDP and alpha-ribazole to generate adenosylcobalamin (Ado-cobalamin). Also synthesizes adenosylcobalamin 5'-phosphate from adenosylcobinamide-GDP and alpha-ribazole 5'-phosphate. This is Adenosylcobinamide-GDP ribazoletransferase from Polaromonas sp. (strain JS666 / ATCC BAA-500).